The sequence spans 1076 residues: Histone deacetylase 4 (1076 aa).

Residues 66–169 (REQQLQQELL…GKESAVASTE (104 aa)) are a coiled coil. The interval 117-312 (MLAMKHQQEL…NSSSGNVSTE (196 aa)) is interaction with MEF2A. Residues 132-162 (KLERHRQEQELEKQHREQKLQQLKNKEKGKE) are compositionally biased toward basic and acidic residues. 3 disordered regions span residues 132–166 (KLER…SAVA), 205–225 (TQHS…ASYN), and 239–323 (PLRK…PSAP). Residues 205–224 (TQHSSLDQSSPPQSGVSASY) show a composition bias toward polar residues. At Ser209 the chain carries Phosphoserine. Ser245 carries the post-translational modification Phosphoserine; by CaMK4 and SIK1. Over residues 258 to 273 (KVAERRSSPLLRRKDG) the composition is skewed to basic and acidic residues. Residues 289–310 (SACSSAPGSGPSSPNSSSGNVS) are compositionally biased toward low complexity. The PxLPxI/L motif; mediates interaction with ANKRA2 and 14-3-3 proteins signature appears at 348-353 (PSLPNI). Phosphoserine is present on Ser349. Ser465 is subject to Phosphoserine; by CaMK4 and SIK1. 3 disordered regions span residues 506–529 (ISKP…ELRE), 541–580 (RLPG…QRPA), and 622–645 (RPLS…EPPT). Positions 514 to 529 (RQPESHPEETEEELRE) are enriched in basic and acidic residues. A Glycyl lysine isopeptide (Lys-Gly) (interchain with G-Cter in SUMO) cross-link involves residue Lys556. Ser562 carries the phosphoserine modification. The span at 626–638 (RAQSSPASATFPM) shows a compositional bias: polar residues. Ser629 carries the phosphoserine; by CaMK4 modification. Position 630 is a phosphoserine (Ser630). The interval 652–1076 (GLVYDTLMLK…EEPMEEEPPL (425 aa)) is histone deacetylase. Residues Cys664, Cys666, His672, and Cys743 each coordinate Zn(2+). Residue His795 is part of the active site. The short motif at 1043 to 1076 (EEAETVTAMASLSVGVKPAEKRSEEEPMEEEPPL) is the Nuclear export signal element.

Belongs to the histone deacetylase family. HD type 2 subfamily. Homodimer. Homodimerization via its N-terminal domain. Interacts with HDAC7. Interacts with MEF2A, MEF2C, MEF2D, MORC2 and NR2C1. Interacts with a 14-3-3 chaperone proteins in a phosphorylation dependent manner. Interacts with 14-3-3 protein YWHAB. Interacts with BTBD14B. Interacts with KDM5B. Interacts (via PxLPxI/L motif) with ANKRA2 (via ankyrin repeats). Interacts with CUL7 (as part of the 3M complex); negatively regulated by ANKRA2. Interacts with EP300 in the presence of TFAP2C. Interacts with AHRR. Interacts with MYOCD. Interacts with HSPA1A and HSPA1B leading to their deacetylation at 'Lys-77'. Interacts with ZBTB7B; the interaction allows the recruitment of HDAC4 on CD8 loci for deacetylation and possible inhibition of CD8 genes expression. Interacts with DHX36. Interacts with SIK3; this interaction leads to HDAC4 retention in the cytoplasm. Interacts with ZNF638. In terms of processing, phosphorylated by CaMK4 at Ser-245, Ser-465 and Ser-629. Phosphorylation at other residues by CaMK2D is required for the interaction with 14-3-3. Phosphorylation at Ser-349, within the PxLPxI/L motif, impairs the binding of ANKRA2 but generates a high-affinity docking site for 14-3-3. Sumoylation on Lys-556 is promoted by the E3 SUMO-protein ligase RANBP2, and prevented by phosphorylation by CaMK4.

It is found in the nucleus. The protein localises to the cytoplasm. It catalyses the reaction N(6)-acetyl-L-lysyl-[histone] + H2O = L-lysyl-[histone] + acetate. Responsible for the deacetylation of lysine residues on the N-terminal part of the core histones (H2A, H2B, H3 and H4). Histone deacetylation gives a tag for epigenetic repression and plays an important role in transcriptional regulation, cell cycle progression and developmental events. Histone deacetylases act via the formation of large multiprotein complexes. Involved in muscle maturation via its interaction with the myocyte enhancer factors such as MEF2A, MEF2C and MEF2D. Deacetylates HSPA1A and HSPA1A at 'Lys-77' leading to their preferential binding to co-chaperone STUB1. This Mus musculus (Mouse) protein is Histone deacetylase 4 (Hdac4).